A 360-amino-acid chain; its full sequence is Serine/threonine-protein kinase SAPK4 (360 aa).

In terms of domain architecture, Protein kinase spans 4 to 260 (YEAVRDIGSG…MKEIKSHPWF (257 aa)). Residues 10–18 (IGSGNFGVA) and K33 each bind ATP. Residue D123 is the Proton acceptor of the active site. Positions 303 to 360 (TMPKSSRTGYWSDAGSDEEEKEEEERPEENEEEEEDEYDKRVKEVHASGELRMSSLRI) are disordered. Positions 317-339 (GSDEEEKEEEERPEENEEEEEDE) are enriched in acidic residues. The span at 340 to 351 (YDKRVKEVHASG) shows a compositional bias: basic and acidic residues.

The protein belongs to the protein kinase superfamily. Ser/Thr protein kinase family. In terms of processing, may be phosphorylated. In terms of tissue distribution, expressed in leaf blades, leaf sheaths and roots. Expressed in shoots and roots of young seedlings.

The enzyme catalyses L-seryl-[protein] + ATP = O-phospho-L-seryl-[protein] + ADP + H(+). It carries out the reaction L-threonyl-[protein] + ATP = O-phospho-L-threonyl-[protein] + ADP + H(+). Activated by hyperosmotic stress. May play a role in signal transduction of hyperosmotic response. This is Serine/threonine-protein kinase SAPK4 (SAPK4) from Oryza sativa subsp. japonica (Rice).